Consider the following 539-residue polypeptide: Protein pim1 (539 aa).

The disordered stretch occupies residues 1 to 53 (MTSNRSTRSSTKREEVSKNGVEKRELDESDVMKNGKKPVKRAKVSSLPKPVRV). Residues 11 to 33 (TKREEVSKNGVEKRELDESDVMK) are compositionally biased toward basic and acidic residues. Residues 34–43 (NGKKPVKRAK) are compositionally biased toward basic residues. RCC1 repeat units lie at residues 70–125 (RLNV…ALSH), 127–191 (GRVY…AITD), 192–243 (NGCC…ALTT), 244–296 (TGKV…AIDN), 298–353 (GRVY…ALLE), 354–417 (DGRV…AVTS), and 419–472 (GKVY…IAGI). Residues 478–539 (EPVANGIKSE…SVLEPSSTTA (62 aa)) are disordered. The span at 486–504 (SEPENEKKLKTEETSKTDD) shows a compositional bias: basic and acidic residues. Polar residues predominate over residues 514–525 (VTSNGEPSTATS).

Oligomer of dis3, pim1 and spi1. Interacts with ned1.

The protein localises to the nucleus. Functionally, promotes the exchange of Ran(spi1)-bound GDP by GTP. Involved in the control of mitosis. Regulates a variety of nuclear events, including mitotic check-point, chromosome decondensation and mRNA processing/transport. The polypeptide is Protein pim1 (pim1) (Schizosaccharomyces pombe (strain 972 / ATCC 24843) (Fission yeast)).